A 122-amino-acid chain; its full sequence is Large ribosomal subunit protein uL14 (122 aa).

It belongs to the universal ribosomal protein uL14 family. As to quaternary structure, part of the 50S ribosomal subunit. Forms a cluster with proteins L3 and L19. In the 70S ribosome, L14 and L19 interact and together make contacts with the 16S rRNA in bridges B5 and B8.

Its function is as follows. Binds to 23S rRNA. Forms part of two intersubunit bridges in the 70S ribosome. This chain is Large ribosomal subunit protein uL14, found in Geobacillus kaustophilus (strain HTA426).